Consider the following 361-residue polypeptide: Probable dual-specificity RNA methyltransferase RlmN (361 aa).

Glu-91 serves as the catalytic Proton acceptor. Residues 97–329 (QHYGLSVCVT…KKKGVNCVVR (233 aa)) form the Radical SAM core domain. Cys-104 and Cys-340 form a disulfide bridge. [4Fe-4S] cluster-binding residues include Cys-111, Cys-115, and Cys-118. Residues 163–164 (GE), Ser-195, 218–220 (SLH), and Asn-296 contribute to the S-adenosyl-L-methionine site. Cys-340 functions as the S-methylcysteine intermediate in the catalytic mechanism.

This sequence belongs to the radical SAM superfamily. RlmN family. The cofactor is [4Fe-4S] cluster.

It is found in the cytoplasm. The catalysed reaction is adenosine(2503) in 23S rRNA + 2 reduced [2Fe-2S]-[ferredoxin] + 2 S-adenosyl-L-methionine = 2-methyladenosine(2503) in 23S rRNA + 5'-deoxyadenosine + L-methionine + 2 oxidized [2Fe-2S]-[ferredoxin] + S-adenosyl-L-homocysteine. It catalyses the reaction adenosine(37) in tRNA + 2 reduced [2Fe-2S]-[ferredoxin] + 2 S-adenosyl-L-methionine = 2-methyladenosine(37) in tRNA + 5'-deoxyadenosine + L-methionine + 2 oxidized [2Fe-2S]-[ferredoxin] + S-adenosyl-L-homocysteine. Specifically methylates position 2 of adenine 2503 in 23S rRNA and position 2 of adenine 37 in tRNAs. The protein is Probable dual-specificity RNA methyltransferase RlmN of Streptococcus pneumoniae serotype 4 (strain ATCC BAA-334 / TIGR4).